The primary structure comprises 155 residues: uncharacterized protein (155 aa).

The N-terminal 17 residues, 1–17 (MMRGASKRSISSAAVLL), are a transit peptide targeting the mitochondrion. Positions 111–155 (WHRQQKRSQRRRSVAKYEQREEAARVEKEEREARDREMVRELFRR) are disordered. Residues 113-124 (RQQKRSQRRRSV) show a composition bias toward basic residues. The segment covering 125 to 155 (AKYEQREEAARVEKEEREARDREMVRELFRR) has biased composition (basic and acidic residues).

It belongs to the prokaryotic/mitochondrial release factor family.

It localises to the mitochondrion. This is an uncharacterized protein from Saccharomyces cerevisiae (strain ATCC 204508 / S288c) (Baker's yeast).